The sequence spans 151 residues: 6,7-dimethyl-8-ribityllumazine synthase (151 aa).

5-amino-6-(D-ribitylamino)uracil contacts are provided by residues Phe-23, 55-57, and 79-81; these read AYE and AVI. A (2S)-2-hydroxy-3-oxobutyl phosphate-binding site is contributed by 84-85; sequence AT. His-87 serves as the catalytic Proton donor. Phe-111 lines the 5-amino-6-(D-ribitylamino)uracil pocket. Position 125 (Arg-125) interacts with (2S)-2-hydroxy-3-oxobutyl phosphate.

The protein belongs to the DMRL synthase family.

It catalyses the reaction (2S)-2-hydroxy-3-oxobutyl phosphate + 5-amino-6-(D-ribitylamino)uracil = 6,7-dimethyl-8-(1-D-ribityl)lumazine + phosphate + 2 H2O + H(+). It functions in the pathway cofactor biosynthesis; riboflavin biosynthesis; riboflavin from 2-hydroxy-3-oxobutyl phosphate and 5-amino-6-(D-ribitylamino)uracil: step 1/2. Catalyzes the formation of 6,7-dimethyl-8-ribityllumazine by condensation of 5-amino-6-(D-ribitylamino)uracil with 3,4-dihydroxy-2-butanone 4-phosphate. This is the penultimate step in the biosynthesis of riboflavin. In Leptospira interrogans serogroup Icterohaemorrhagiae serovar Lai (strain 56601), this protein is 6,7-dimethyl-8-ribityllumazine synthase.